Reading from the N-terminus, the 108-residue chain is UPF0145 protein gll1048 (108 aa).

This sequence belongs to the UPF0145 family.

This is UPF0145 protein gll1048 from Gloeobacter violaceus (strain ATCC 29082 / PCC 7421).